We begin with the raw amino-acid sequence, 61 residues long: Small ribosomal subunit protein uS14 (61 aa).

Zn(2+)-binding residues include cysteine 24, cysteine 27, cysteine 40, and cysteine 43.

This sequence belongs to the universal ribosomal protein uS14 family. Zinc-binding uS14 subfamily. In terms of assembly, part of the 30S ribosomal subunit. Contacts proteins S3 and S10. Zn(2+) is required as a cofactor.

Binds 16S rRNA, required for the assembly of 30S particles and may also be responsible for determining the conformation of the 16S rRNA at the A site. The polypeptide is Small ribosomal subunit protein uS14 (Heliobacterium modesticaldum (strain ATCC 51547 / Ice1)).